The primary structure comprises 482 residues: BEL1-like homeodomain protein 7 (482 aa).

The interval 118–134 (SKYLKAAQELLDETVNV) is SR/KY domain. Positions 167–238 (ERQELQSKLS…CLRDAISGQI (72 aa)) are BELL domain. The homeobox DNA-binding region spans 285–347 (TWRPQRGLPD…NARVRLWKPM (63 aa)). The tract at residues 358 to 401 (DALQENDPNQSSENTPEITEIQELQTESSSNNGHVPGVASSSMR) is disordered. The span at 363 to 401 (NDPNQSSENTPEITEIQELQTESSSNNGHVPGVASSSMR) shows a compositional bias: polar residues.

It belongs to the TALE/BELL homeobox family. May form heterodimeric complexes with TALE/KNOX proteins.

It localises to the nucleus. In Arabidopsis thaliana (Mouse-ear cress), this protein is BEL1-like homeodomain protein 7 (BLH7).